The primary structure comprises 308 residues: Aspartate carbamoyltransferase catalytic subunit (308 aa).

2 residues coordinate carbamoyl phosphate: arginine 57 and threonine 58. Lysine 86 contributes to the L-aspartate binding site. Carbamoyl phosphate-binding residues include arginine 107, histidine 135, and glutamine 138. L-aspartate-binding residues include arginine 168 and arginine 229. Residues leucine 268 and proline 269 each coordinate carbamoyl phosphate.

The protein belongs to the aspartate/ornithine carbamoyltransferase superfamily. ATCase family. Heterooligomer of catalytic and regulatory chains.

The enzyme catalyses carbamoyl phosphate + L-aspartate = N-carbamoyl-L-aspartate + phosphate + H(+). The protein operates within pyrimidine metabolism; UMP biosynthesis via de novo pathway; (S)-dihydroorotate from bicarbonate: step 2/3. Its function is as follows. Catalyzes the condensation of carbamoyl phosphate and aspartate to form carbamoyl aspartate and inorganic phosphate, the committed step in the de novo pyrimidine nucleotide biosynthesis pathway. The chain is Aspartate carbamoyltransferase catalytic subunit from Pyrococcus abyssi (strain GE5 / Orsay).